Here is a 467-residue protein sequence, read N- to C-terminus: Fumarate hydratase class II (467 aa).

Substrate-binding positions include 99–101 (SGT), 130–133 (HPND), 140–142 (SSN), and threonine 188. Histidine 189 functions as the Proton donor/acceptor in the catalytic mechanism. Serine 319 is a catalytic residue. Substrate-binding positions include serine 320 and 325 to 327 (KVN).

Belongs to the class-II fumarase/aspartase family. Fumarase subfamily. Homotetramer.

Its subcellular location is the cytoplasm. The enzyme catalyses (S)-malate = fumarate + H2O. It functions in the pathway carbohydrate metabolism; tricarboxylic acid cycle; (S)-malate from fumarate: step 1/1. Involved in the TCA cycle. Catalyzes the stereospecific interconversion of fumarate to L-malate. This is Fumarate hydratase class II from Thermosynechococcus vestitus (strain NIES-2133 / IAM M-273 / BP-1).